A 442-amino-acid polypeptide reads, in one-letter code: MSNTKQAPKVGFVSLGCPKNLVDSERILTQLRTEGYDVVPSYDDAEVVVVNTCGFIDSAVQESLEAIGEALAENGKVIVTGCLGAKENQIREIHPKVLEITGPHAYEEVLGHVHKYVEKPTHNPFTSLVPAQGVKLTPRHYAYLKISEGCNHRCTFCIIPSMRGDLVSRPIGEVLAEAKRLKEAGVKEILVISQDTSAYGVDVKHRTGFYDGMPVKTSMVALCEELAKLGMWVRLHYVYPYPHVDDVIPLMRDGKVLPYLDIPLQHASPRILKLMKRPGTVERTLERIQKWREICPEITLRSTFIVGFPGETEEEFQMLLDFIDKAELDRVGCFKYSPVEGAKANELPDPVPEEVQEERFQRFMELQQQVSIRKLARKVGKEMLVLIDEVDEEGATGRSAADAPEIDGLVYLNGETGLKPGDMVKVRIDEADEYDLWASLID.

The region spanning 8 to 118 (PKVGFVSLGC…VLGHVHKYVE (111 aa)) is the MTTase N-terminal domain. [4Fe-4S] cluster-binding residues include cysteine 17, cysteine 53, cysteine 82, cysteine 150, cysteine 154, and cysteine 157. The region spanning 136–373 (LTPRHYAYLK…MELQQQVSIR (238 aa)) is the Radical SAM core domain. The region spanning 376–442 (ARKVGKEMLV…EYDLWASLID (67 aa)) is the TRAM domain.

The protein belongs to the methylthiotransferase family. RimO subfamily. Requires [4Fe-4S] cluster as cofactor.

Its subcellular location is the cytoplasm. The catalysed reaction is L-aspartate(89)-[ribosomal protein uS12]-hydrogen + (sulfur carrier)-SH + AH2 + 2 S-adenosyl-L-methionine = 3-methylsulfanyl-L-aspartate(89)-[ribosomal protein uS12]-hydrogen + (sulfur carrier)-H + 5'-deoxyadenosine + L-methionine + A + S-adenosyl-L-homocysteine + 2 H(+). Catalyzes the methylthiolation of an aspartic acid residue of ribosomal protein uS12. In Aeromonas hydrophila subsp. hydrophila (strain ATCC 7966 / DSM 30187 / BCRC 13018 / CCUG 14551 / JCM 1027 / KCTC 2358 / NCIMB 9240 / NCTC 8049), this protein is Ribosomal protein uS12 methylthiotransferase RimO.